A 154-amino-acid chain; its full sequence is Interleukin-2 (154 aa).

The first 20 residues, 1–20 (MYRMQLLSCIALSLALITNS), serve as a signal peptide directing secretion. O-linked (GalNAc...) threonine glycosylation is present at Thr-23. The cysteines at positions 78 and 126 are disulfide-linked.

Belongs to the IL-2 family.

The protein localises to the secreted. Cytokine produced by activated CD4-positive helper T-cells and to a lesser extend activated CD8-positive T-cells and natural killer (NK) cells that plays pivotal roles in the immune response and tolerance. Binds to a receptor complex composed of either the high-affinity trimeric IL-2R (IL2RA/CD25, IL2RB/CD122 and IL2RG/CD132) or the low-affinity dimeric IL-2R (IL2RB and IL2RG). Interaction with the receptor leads to oligomerization and conformation changes in the IL-2R subunits resulting in downstream signaling starting with phosphorylation of JAK1 and JAK3. In turn, JAK1 and JAK3 phosphorylate the receptor to form a docking site leading to the phosphorylation of several substrates including STAT5. This process leads to activation of several pathways including STAT, phosphoinositide-3-kinase/PI3K and mitogen-activated protein kinase/MAPK pathways. Functions as a T-cell growth factor and can increase NK-cell cytolytic activity as well. Promotes strong proliferation of activated B-cells and subsequently immunoglobulin production. Plays a pivotal role in regulating the adaptive immune system by controlling the survival and proliferation of regulatory T-cells, which are required for the maintenance of immune tolerance. Moreover, participates in the differentiation and homeostasis of effector T-cell subsets, including Th1, Th2, Th17 as well as memory CD8-positive T-cells. The sequence is that of Interleukin-2 (IL2) from Saimiri sciureus (Common squirrel monkey).